Reading from the N-terminus, the 350-residue chain is Small ribosomal subunit biogenesis GTPase RsgA (350 aa).

Polar residues predominate over residues 1–17 (MSKNKLSKGQQRRVNAN). The segment at 1-33 (MSKNKLSKGQQRRVNANHQRRLKTSKEKPDYDD) is disordered. The 170-residue stretch at 104 to 273 (TSVLTRPDFY…VIDSPGVREF (170 aa)) folds into the CP-type G domain. GTP-binding positions include 160-163 (NKID) and 214-222 (GQSGVGKSS). 4 residues coordinate Zn(2+): C297, C302, H304, and C310.

Belongs to the TRAFAC class YlqF/YawG GTPase family. RsgA subfamily. In terms of assembly, monomer. Associates with 30S ribosomal subunit, binds 16S rRNA. The cofactor is Zn(2+).

The protein resides in the cytoplasm. One of several proteins that assist in the late maturation steps of the functional core of the 30S ribosomal subunit. Helps release RbfA from mature subunits. May play a role in the assembly of ribosomal proteins into the subunit. Circularly permuted GTPase that catalyzes slow GTP hydrolysis, GTPase activity is stimulated by the 30S ribosomal subunit. This is Small ribosomal subunit biogenesis GTPase RsgA from Shigella boydii serotype 18 (strain CDC 3083-94 / BS512).